The sequence spans 250 residues: 1-(5-phosphoribosyl)-5-[(5-phosphoribosylamino)methylideneamino] imidazole-4-carboxamide isomerase (250 aa).

Asp-12 functions as the Proton acceptor in the catalytic mechanism. Asp-133 serves as the catalytic Proton donor.

The protein belongs to the HisA/HisF family.

It is found in the cytoplasm. The catalysed reaction is 1-(5-phospho-beta-D-ribosyl)-5-[(5-phospho-beta-D-ribosylamino)methylideneamino]imidazole-4-carboxamide = 5-[(5-phospho-1-deoxy-D-ribulos-1-ylimino)methylamino]-1-(5-phospho-beta-D-ribosyl)imidazole-4-carboxamide. It participates in amino-acid biosynthesis; L-histidine biosynthesis; L-histidine from 5-phospho-alpha-D-ribose 1-diphosphate: step 4/9. The protein is 1-(5-phosphoribosyl)-5-[(5-phosphoribosylamino)methylideneamino] imidazole-4-carboxamide isomerase of Zymomonas mobilis subsp. mobilis (strain ATCC 31821 / ZM4 / CP4).